The following is a 347-amino-acid chain: Nicotinate-nucleotide--dimethylbenzimidazole phosphoribosyltransferase (347 aa).

E316 functions as the Proton acceptor in the catalytic mechanism.

This sequence belongs to the CobT family.

It catalyses the reaction 5,6-dimethylbenzimidazole + nicotinate beta-D-ribonucleotide = alpha-ribazole 5'-phosphate + nicotinate + H(+). The protein operates within nucleoside biosynthesis; alpha-ribazole biosynthesis; alpha-ribazole from 5,6-dimethylbenzimidazole: step 1/2. In terms of biological role, catalyzes the synthesis of alpha-ribazole-5'-phosphate from nicotinate mononucleotide (NAMN) and 5,6-dimethylbenzimidazole (DMB). This is Nicotinate-nucleotide--dimethylbenzimidazole phosphoribosyltransferase from Vibrio campbellii (strain ATCC BAA-1116).